Consider the following 43-residue polypeptide: Defensin (43 aa).

3 disulfides stabilise this stretch: Cys3/Cys34, Cys20/Cys39, and Cys24/Cys41.

The protein localises to the secreted. Its function is as follows. Antibacterial peptide. Affects Gram-negative bacteria including methicillin-resistant Staphylococcus aureus. The protein is Defensin of Trypoxylus dichotomus (Japanese rhinoceros beetle).